The primary structure comprises 549 residues: uncharacterized protein (549 aa).

The next 12 helical transmembrane spans lie at Ile27–Val47, Pro108–Phe128, Thr146–Ala166, Ala197–Leu217, Phe233–Val253, Val265–Leu285, Phe308–Leu328, Leu352–Val372, Thr399–Gly419, Leu434–Gly454, Ile472–Ile492, and Ile501–Gly521.

Its subcellular location is the cell membrane. This is an uncharacterized protein from Mycoplasma pneumoniae (strain ATCC 29342 / M129 / Subtype 1) (Mycoplasmoides pneumoniae).